A 579-amino-acid polypeptide reads, in one-letter code: Tyrosine 3-monooxygenase (579 aa).

Residues 105–114 (VEFESVEQEQ) are compositionally biased toward acidic residues. The interval 105 to 132 (VEFESVEQEQSESQSQEPEGNQQPTKND) is disordered. Fe cation contacts are provided by His-409, His-414, and Glu-454.

This sequence belongs to the biopterin-dependent aromatic amino acid hydroxylase family. The cofactor is Fe(2+).

The protein localises to the cytoplasm. The protein resides in the perinuclear region. It localises to the cell projection. Its subcellular location is the axon. The catalysed reaction is (6R)-L-erythro-5,6,7,8-tetrahydrobiopterin + L-tyrosine + O2 = (4aS,6R)-4a-hydroxy-L-erythro-5,6,7,8-tetrahydrobiopterin + L-dopa. It participates in catecholamine biosynthesis; dopamine biosynthesis; dopamine from L-tyrosine: step 1/2. Its activity is regulated as follows. Phosphorylation leads to an increase in the catalytic activity. Its function is as follows. Plays an important role in the physiology of adrenergic neurons. The chain is Tyrosine 3-monooxygenase (ple) from Drosophila melanogaster (Fruit fly).